The primary structure comprises 73 residues: Small ribosomal subunit protein bS18c (73 aa).

Belongs to the bacterial ribosomal protein bS18 family. In terms of assembly, part of the 30S ribosomal subunit.

It is found in the plastid. Its subcellular location is the chloroplast. The sequence is that of Small ribosomal subunit protein bS18c from Rhodomonas salina (Cryptomonas salina).